Here is a 337-residue protein sequence, read N- to C-terminus: Holliday junction branch migration complex subunit RuvB (337 aa).

Residues 1-180 form a large ATPase domain (RuvB-L) region; that stretch reads MTRLISADKS…FGVISRLEFY (180 aa). ATP is bound by residues Leu-19, Arg-20, Gly-61, Lys-64, Thr-65, Thr-66, 127 to 129, Arg-170, Tyr-180, and Arg-217; that span reads EDF. Residue Thr-65 coordinates Mg(2+). A small ATPAse domain (RuvB-S) region spans residues 181–251; the sequence is THDELAFIIT…VADQALALLE (71 aa). Residues 254 to 337 are head domain (RuvB-H); the sequence is EMGFDMMDRA…APEPPQGKLF (84 aa). Arg-309 and Arg-314 together coordinate DNA.

Belongs to the RuvB family. In terms of assembly, homohexamer. Forms an RuvA(8)-RuvB(12)-Holliday junction (HJ) complex. HJ DNA is sandwiched between 2 RuvA tetramers; dsDNA enters through RuvA and exits via RuvB. An RuvB hexamer assembles on each DNA strand where it exits the tetramer. Each RuvB hexamer is contacted by two RuvA subunits (via domain III) on 2 adjacent RuvB subunits; this complex drives branch migration. In the full resolvosome a probable DNA-RuvA(4)-RuvB(12)-RuvC(2) complex forms which resolves the HJ.

The protein localises to the cytoplasm. It carries out the reaction ATP + H2O = ADP + phosphate + H(+). In terms of biological role, the RuvA-RuvB-RuvC complex processes Holliday junction (HJ) DNA during genetic recombination and DNA repair, while the RuvA-RuvB complex plays an important role in the rescue of blocked DNA replication forks via replication fork reversal (RFR). RuvA specifically binds to HJ cruciform DNA, conferring on it an open structure. The RuvB hexamer acts as an ATP-dependent pump, pulling dsDNA into and through the RuvAB complex. RuvB forms 2 homohexamers on either side of HJ DNA bound by 1 or 2 RuvA tetramers; 4 subunits per hexamer contact DNA at a time. Coordinated motions by a converter formed by DNA-disengaged RuvB subunits stimulates ATP hydrolysis and nucleotide exchange. Immobilization of the converter enables RuvB to convert the ATP-contained energy into a lever motion, pulling 2 nucleotides of DNA out of the RuvA tetramer per ATP hydrolyzed, thus driving DNA branch migration. The RuvB motors rotate together with the DNA substrate, which together with the progressing nucleotide cycle form the mechanistic basis for DNA recombination by continuous HJ branch migration. Branch migration allows RuvC to scan DNA until it finds its consensus sequence, where it cleaves and resolves cruciform DNA. This chain is Holliday junction branch migration complex subunit RuvB, found in Geobacter sp. (strain M21).